The following is a 198-amino-acid chain: Probable molybdenum cofactor guanylyltransferase (198 aa).

GTP is bound by residues 9-11, Lys-22, Asp-66, and Asp-95; that span reads LAG. Asp-95 contributes to the Mg(2+) binding site.

The protein belongs to the MobA family. Requires Mg(2+) as cofactor.

The protein resides in the cytoplasm. The enzyme catalyses Mo-molybdopterin + GTP + H(+) = Mo-molybdopterin guanine dinucleotide + diphosphate. Transfers a GMP moiety from GTP to Mo-molybdopterin (Mo-MPT) cofactor (Moco or molybdenum cofactor) to form Mo-molybdopterin guanine dinucleotide (Mo-MGD) cofactor. This chain is Probable molybdenum cofactor guanylyltransferase, found in Clostridium perfringens (strain ATCC 13124 / DSM 756 / JCM 1290 / NCIMB 6125 / NCTC 8237 / Type A).